The following is a 364-amino-acid chain: Methylthioribose-1-phosphate isomerase (364 aa).

Substrate contacts are provided by residues 53 to 55 (RGA), Arg-90, and Gln-203. The Proton donor role is filled by Asp-244. 254-255 (NK) contacts substrate.

The protein belongs to the eIF-2B alpha/beta/delta subunits family. MtnA subfamily.

The enzyme catalyses 5-(methylsulfanyl)-alpha-D-ribose 1-phosphate = 5-(methylsulfanyl)-D-ribulose 1-phosphate. The protein operates within amino-acid biosynthesis; L-methionine biosynthesis via salvage pathway; L-methionine from S-methyl-5-thio-alpha-D-ribose 1-phosphate: step 1/6. Functionally, catalyzes the interconversion of methylthioribose-1-phosphate (MTR-1-P) into methylthioribulose-1-phosphate (MTRu-1-P). This is Methylthioribose-1-phosphate isomerase from Rhizobium meliloti (strain 1021) (Ensifer meliloti).